A 218-amino-acid polypeptide reads, in one-letter code: Small ribosomal subunit protein uS5 (218 aa).

The 64-residue stretch at 55–118 folds into the S5 DRBM domain; sequence LDHEVIDVSI…RNAKLNIIPV (64 aa).

It belongs to the universal ribosomal protein uS5 family. Part of the 30S ribosomal subunit. Contacts protein S4.

Its function is as follows. With S4 and S12 plays an important role in translational accuracy. The polypeptide is Small ribosomal subunit protein uS5 (Aeropyrum pernix (strain ATCC 700893 / DSM 11879 / JCM 9820 / NBRC 100138 / K1)).